We begin with the raw amino-acid sequence, 418 residues long: Histidine--tRNA ligase (418 aa).

Belongs to the class-II aminoacyl-tRNA synthetase family.

The protein localises to the cytoplasm. It carries out the reaction tRNA(His) + L-histidine + ATP = L-histidyl-tRNA(His) + AMP + diphosphate + H(+). The protein is Histidine--tRNA ligase of Methanococcus vannielii (strain ATCC 35089 / DSM 1224 / JCM 13029 / OCM 148 / SB).